Reading from the N-terminus, the 454-residue chain is Bifunctional protein GlmU (454 aa).

The interval 1 to 228 (MTLPLHVVIL…PQHVEGANDP (228 aa)) is pyrophosphorylase. UDP-N-acetyl-alpha-D-glucosamine-binding positions include 10-13 (LAAG), lysine 24, glutamine 76, 81-82 (GT), 103-105 (YGD), glycine 138, glutamate 153, asparagine 168, and asparagine 226. Residue aspartate 105 coordinates Mg(2+). Asparagine 226 is a Mg(2+) binding site. Positions 229 to 249 (WQLAQLERAWQLRAARTLCLQ) are linker. The interval 250–454 (GVRMADPARV…IEGWKRPTKK (205 aa)) is N-acetyltransferase. UDP-N-acetyl-alpha-D-glucosamine-binding residues include arginine 332 and lysine 350. The active-site Proton acceptor is the histidine 362. Positions 365 and 376 each coordinate UDP-N-acetyl-alpha-D-glucosamine. Acetyl-CoA-binding positions include alanine 379, 385 to 386 (NY), serine 404, alanine 422, and arginine 439.

The protein in the N-terminal section; belongs to the N-acetylglucosamine-1-phosphate uridyltransferase family. In the C-terminal section; belongs to the transferase hexapeptide repeat family. As to quaternary structure, homotrimer. It depends on Mg(2+) as a cofactor.

It is found in the cytoplasm. The catalysed reaction is alpha-D-glucosamine 1-phosphate + acetyl-CoA = N-acetyl-alpha-D-glucosamine 1-phosphate + CoA + H(+). It catalyses the reaction N-acetyl-alpha-D-glucosamine 1-phosphate + UTP + H(+) = UDP-N-acetyl-alpha-D-glucosamine + diphosphate. It participates in nucleotide-sugar biosynthesis; UDP-N-acetyl-alpha-D-glucosamine biosynthesis; N-acetyl-alpha-D-glucosamine 1-phosphate from alpha-D-glucosamine 6-phosphate (route II): step 2/2. Its pathway is nucleotide-sugar biosynthesis; UDP-N-acetyl-alpha-D-glucosamine biosynthesis; UDP-N-acetyl-alpha-D-glucosamine from N-acetyl-alpha-D-glucosamine 1-phosphate: step 1/1. It functions in the pathway bacterial outer membrane biogenesis; LPS lipid A biosynthesis. Its function is as follows. Catalyzes the last two sequential reactions in the de novo biosynthetic pathway for UDP-N-acetylglucosamine (UDP-GlcNAc). The C-terminal domain catalyzes the transfer of acetyl group from acetyl coenzyme A to glucosamine-1-phosphate (GlcN-1-P) to produce N-acetylglucosamine-1-phosphate (GlcNAc-1-P), which is converted into UDP-GlcNAc by the transfer of uridine 5-monophosphate (from uridine 5-triphosphate), a reaction catalyzed by the N-terminal domain. The sequence is that of Bifunctional protein GlmU from Xanthomonas euvesicatoria pv. vesicatoria (strain 85-10) (Xanthomonas campestris pv. vesicatoria).